The sequence spans 672 residues: PHD finger protein MALE STERILITY 1 (672 aa).

The PHD-type zinc finger occupies arginine 614–histidine 664.

In terms of tissue distribution, in closed flower buds, especially in anthers.

The protein localises to the nucleus. In terms of biological role, transcriptional activator required for anther and post-meiotic pollen development and maturation. Seems to regulate inflorescence branching and floral development. May control tapetal development by directly regulating tapetal programmed cell death (PCD) and breakdown. Implicated in pollen cytosolic components and wall development (e.g. exine and intine formation). The sequence is that of PHD finger protein MALE STERILITY 1 (MS1) from Arabidopsis thaliana (Mouse-ear cress).